The sequence spans 295 residues: Pyridoxal 5'-phosphate synthase subunit PdxS (295 aa).

D-ribose 5-phosphate is bound at residue aspartate 25. Lysine 82 serves as the catalytic Schiff-base intermediate with D-ribose 5-phosphate. Glycine 154 contributes to the D-ribose 5-phosphate binding site. Arginine 166 provides a ligand contact to D-glyceraldehyde 3-phosphate. D-ribose 5-phosphate-binding positions include glycine 215 and glycine 236–serine 237.

Belongs to the PdxS/SNZ family. In terms of assembly, in the presence of PdxT, forms a dodecamer of heterodimers.

The catalysed reaction is aldehydo-D-ribose 5-phosphate + D-glyceraldehyde 3-phosphate + L-glutamine = pyridoxal 5'-phosphate + L-glutamate + phosphate + 3 H2O + H(+). It participates in cofactor biosynthesis; pyridoxal 5'-phosphate biosynthesis. In terms of biological role, catalyzes the formation of pyridoxal 5'-phosphate from ribose 5-phosphate (RBP), glyceraldehyde 3-phosphate (G3P) and ammonia. The ammonia is provided by the PdxT subunit. Can also use ribulose 5-phosphate and dihydroxyacetone phosphate as substrates, resulting from enzyme-catalyzed isomerization of RBP and G3P, respectively. In Staphylococcus haemolyticus (strain JCSC1435), this protein is Pyridoxal 5'-phosphate synthase subunit PdxS.